An 89-amino-acid chain; its full sequence is MAKESMKARELKRARLVAKYVDKRVRLKKEGNYDSLQALPKNASPVRLHNRCRITGRSKGYIRQFGISRIQLREMASMGLVPGVRKASW.

This sequence belongs to the universal ribosomal protein uS14 family. In terms of assembly, part of the 30S ribosomal subunit. Contacts proteins S3 and S10.

In terms of biological role, binds 16S rRNA, required for the assembly of 30S particles and may also be responsible for determining the conformation of the 16S rRNA at the A site. The chain is Small ribosomal subunit protein uS14 from Azobacteroides pseudotrichonymphae genomovar. CFP2.